The primary structure comprises 538 residues: Importin subunit alpha-6 (538 aa).

The IBB domain occupies 1 to 58 (MSYKPSAKTEVRRNRYKVSVDADEGRRRREDNMVEIRKNKREENLQKKRREGFNPSMA). The interval 1 to 69 (MSYKPSAKTE…QPGQDFSSSL (69 aa)) is disordered. Residues 7 to 46 (AKTEVRRNRYKVSVDADEGRRRREDNMVEIRKNKREENLQ) are compositionally biased toward basic and acidic residues. A compositionally biased stretch (polar residues) spans 56–69 (SMASQPGQDFSSSL). ARM repeat units lie at residues 109–149 (NPPI…NIAS), 152–191 (SENT…NVAG), 194–234 (PKCR…NFCR), 236–275 (KPQP…YLSD), 278–317 (NEKI…NIVT), 320–360 (DIQT…NITA), 363–402 (TSQI…NATS), and 406–445 (HDQI…NILK).

This sequence belongs to the importin alpha family. Forms a complex with importin subunit beta-1.

It localises to the nucleus envelope. Functionally, binds to conventional NLS motifs and mediates nuclear protein import across the nuclear envelope. Acts as a cellular receptor for the nuclear import of the virD2 protein of Agrobacterium, but is not essential for Agrobacterium-mediated root transformation. The chain is Importin subunit alpha-6 from Arabidopsis thaliana (Mouse-ear cress).